Consider the following 347-residue polypeptide: Selenide, water dikinase (347 aa).

Cys16 is a catalytic residue. ATP is bound by residues Lys19 and 47-49 (TRD). Asp50 contacts Mg(2+). ATP contacts are provided by residues Asp67, Asp90, and 138–140 (GHS). Position 90 (Asp90) interacts with Mg(2+). Residue Asp226 coordinates Mg(2+).

It belongs to the selenophosphate synthase 1 family. Class I subfamily. Homodimer. Mg(2+) serves as cofactor.

The catalysed reaction is hydrogenselenide + ATP + H2O = selenophosphate + AMP + phosphate + 2 H(+). Synthesizes selenophosphate from selenide and ATP. The chain is Selenide, water dikinase from Photorhabdus laumondii subsp. laumondii (strain DSM 15139 / CIP 105565 / TT01) (Photorhabdus luminescens subsp. laumondii).